The primary structure comprises 359 residues: Phospho-N-acetylmuramoyl-pentapeptide-transferase (359 aa).

10 helical membrane passes run 23 to 43 (VAFF…IKWA), 68 to 88 (MGGI…GNLF), 92 to 112 (VLLG…DDYM), 126 to 146 (MKFF…LYIG), 165 to 185 (AFKI…VFLA), 198 to 218 (GLAT…VYVA), 235 to 255 (SGEL…FLWY), 262 to 282 (VFMG…MAIV), 287 to 307 (ILLL…ILQV), and 336 to 356 (KIIV…LLSL).

Belongs to the glycosyltransferase 4 family. MraY subfamily. Mg(2+) is required as a cofactor.

The protein localises to the cell inner membrane. The enzyme catalyses UDP-N-acetyl-alpha-D-muramoyl-L-alanyl-gamma-D-glutamyl-meso-2,6-diaminopimeloyl-D-alanyl-D-alanine + di-trans,octa-cis-undecaprenyl phosphate = di-trans,octa-cis-undecaprenyl diphospho-N-acetyl-alpha-D-muramoyl-L-alanyl-D-glutamyl-meso-2,6-diaminopimeloyl-D-alanyl-D-alanine + UMP. It functions in the pathway cell wall biogenesis; peptidoglycan biosynthesis. Functionally, catalyzes the initial step of the lipid cycle reactions in the biosynthesis of the cell wall peptidoglycan: transfers peptidoglycan precursor phospho-MurNAc-pentapeptide from UDP-MurNAc-pentapeptide onto the lipid carrier undecaprenyl phosphate, yielding undecaprenyl-pyrophosphoryl-MurNAc-pentapeptide, known as lipid I. The protein is Phospho-N-acetylmuramoyl-pentapeptide-transferase of Helicobacter hepaticus (strain ATCC 51449 / 3B1).